A 61-amino-acid polypeptide reads, in one-letter code: Small ribosomal subunit protein uS14 (61 aa).

The segment covering 1 to 12 has biased composition (acidic residues); the sequence is MSESETTDEPDS. Positions 1–25 are disordered; that stretch reads MSESETTDEPDSETASSERTGQLES. Zn(2+) contacts are provided by cysteine 26, cysteine 29, cysteine 44, and cysteine 47.

This sequence belongs to the universal ribosomal protein uS14 family. Zinc-binding uS14 subfamily. In terms of assembly, part of the 30S ribosomal subunit. The cofactor is Zn(2+).

Binds 16S rRNA, required for the assembly of 30S particles. The protein is Small ribosomal subunit protein uS14 of Haloarcula marismortui (strain ATCC 43049 / DSM 3752 / JCM 8966 / VKM B-1809) (Halobacterium marismortui).